The sequence spans 387 residues: Large ribosomal subunit protein uL3 (387 aa).

Ser24 carries the post-translational modification Phosphoserine. A Glycyl lysine isopeptide (Lys-Gly) (interchain with G-Cter in ubiquitin) cross-link involves residue Lys39. At Thr103 the chain carries Phosphothreonine. Residue Lys136 forms a Glycyl lysine isopeptide (Lys-Gly) (interchain with G-Cter in ubiquitin) linkage. At Ser156 the chain carries Phosphoserine. The residue at position 243 (His243) is a Pros-methylhistidine. Ser297 bears the Phosphoserine mark.

The protein belongs to the universal ribosomal protein uL3 family. As to quaternary structure, component of the large ribosomal subunit (LSU). Mature yeast ribosomes consist of a small (40S) and a large (60S) subunit. The 40S small subunit contains 1 molecule of ribosomal RNA (18S rRNA) and 33 different proteins (encoded by 57 genes). The large 60S subunit contains 3 rRNA molecules (25S, 5.8S and 5S rRNA) and 46 different proteins (encoded by 81 genes). uL3 forms together with ES39L one of the contact sites for the signal recognition particle that targets ribosomes to the endoplasmic reticulum membrane. Methylation at His-243 by HPM1 is required for proper 60S subunit assembly and promotes translational elongation fidelity.

It localises to the cytoplasm. Its function is as follows. Component of the ribosome, a large ribonucleoprotein complex responsible for the synthesis of proteins in the cell. The small ribosomal subunit (SSU) binds messenger RNAs (mRNAs) and translates the encoded message by selecting cognate aminoacyl-transfer RNA (tRNA) molecules. The large subunit (LSU) contains the ribosomal catalytic site termed the peptidyl transferase center (PTC), which catalyzes the formation of peptide bonds, thereby polymerizing the amino acids delivered by tRNAs into a polypeptide chain. The nascent polypeptides leave the ribosome through a tunnel in the LSU and interact with protein factors that function in enzymatic processing, targeting, and the membrane insertion of nascent chains at the exit of the ribosomal tunnel. uL3 plays a role in coordinating processes of accommodating the aminoacyl-tRNA in the PTC. The protein is Large ribosomal subunit protein uL3 of Saccharomyces cerevisiae (strain ATCC 204508 / S288c) (Baker's yeast).